The chain runs to 163 residues: Endoribonuclease YbeY (163 aa).

Positions 121, 125, and 131 each coordinate Zn(2+).

Belongs to the endoribonuclease YbeY family. Zn(2+) is required as a cofactor.

It is found in the cytoplasm. Single strand-specific metallo-endoribonuclease involved in late-stage 70S ribosome quality control and in maturation of the 3' terminus of the 16S rRNA. The polypeptide is Endoribonuclease YbeY (Synechococcus sp. (strain JA-3-3Ab) (Cyanobacteria bacterium Yellowstone A-Prime)).